We begin with the raw amino-acid sequence, 399 residues long: Galactokinase (399 aa).

Position 42–45 (42–45 (EHTD)) interacts with substrate. Residues Ser76 and 133–139 (ASGLSSS) contribute to the ATP site. Positions 139 and 171 each coordinate Mg(2+). Asp183 functions as the Proton acceptor in the catalytic mechanism. Tyr233 lines the substrate pocket.

Belongs to the GHMP kinase family. GalK subfamily. Monomer.

It localises to the cytoplasm. The catalysed reaction is alpha-D-galactose + ATP = alpha-D-galactose 1-phosphate + ADP + H(+). It functions in the pathway carbohydrate metabolism; galactose metabolism. Its function is as follows. Catalyzes the transfer of the gamma-phosphate of ATP to D-galactose to form alpha-D-galactose-1-phosphate (Gal-1-P). In Lactococcus lactis subsp. lactis (strain IL1403) (Streptococcus lactis), this protein is Galactokinase.